The chain runs to 315 residues: MTTSSLPILIVICGATATGKSSLALQLAEKFNSVILSADSRQIYREFNIGTAKPSLEECQRIPHYLIDICDPQDNFTLAQYQEQAEDLINNLHYSPLFLVGGTGLYIKSIVKGLKIPRVSPQADLRRQLQALGQSYLYQILTQVDEEAAKKIHPHDQVRTLRALEVFYLTGKPISSQQGENPPTYPILQIGLDCSPESLGKRITVRTDQMIARGLVAEVQNLGDKYGWDLPLLQTLGYAEIKQYLLGEISLEQAIDLIILHTRQFAKRQRTWFRADADIIWFPVDKENLLESVEREIILFLEGLSRPDIKTHHPD.

Gly-14–Ser-21 contacts ATP. Position 16–21 (Thr-16–Ser-21) interacts with substrate. Positions Asp-39–Gln-42 are interaction with substrate tRNA.

This sequence belongs to the IPP transferase family. In terms of assembly, monomer. Mg(2+) serves as cofactor.

It catalyses the reaction adenosine(37) in tRNA + dimethylallyl diphosphate = N(6)-dimethylallyladenosine(37) in tRNA + diphosphate. Its function is as follows. Catalyzes the transfer of a dimethylallyl group onto the adenine at position 37 in tRNAs that read codons beginning with uridine, leading to the formation of N6-(dimethylallyl)adenosine (i(6)A). The sequence is that of tRNA dimethylallyltransferase from Microcystis aeruginosa (strain NIES-843 / IAM M-2473).